A 339-amino-acid polypeptide reads, in one-letter code: Retinol dehydrogenase 10-A (339 aa).

Residues 3 to 23 (IFVEFFLVMLKVCWAIVMAGF) form a helical; Signal-anchor membrane-spanning segment. 40–64 (VITGAGGGLGRLFAKEFARRRATLV) provides a ligand contact to NADP(+). Ser195 provides a ligand contact to substrate. Residue Tyr208 is the Proton acceptor of the active site.

It belongs to the short-chain dehydrogenases/reductases (SDR) family.

The protein resides in the microsome membrane. The protein localises to the endoplasmic reticulum membrane. The enzyme catalyses all-trans-retinol + NADP(+) = all-trans-retinal + NADPH + H(+). The protein operates within cofactor metabolism; retinol metabolism. Functionally, retinol dehydrogenase with a clear preference for NADP. Converts all-trans-retinol to all-trans-retinal. Has no detectable activity towards 11-cis-retinol, 9-cis-retinol and 13-cis-retinol. The protein is Retinol dehydrogenase 10-A (rdh10a) of Danio rerio (Zebrafish).